We begin with the raw amino-acid sequence, 357 residues long: Thymidine kinase (357 aa).

17–24 (GAHGLGKT) contacts ATP. The Proton acceptor role is filled by glutamate 45. Arginine 186 lines the ATP pocket. A substrate-binding site is contributed by arginine 192.

This sequence belongs to the herpesviridae thymidine kinase family. Homodimer.

The enzyme catalyses thymidine + ATP = dTMP + ADP + H(+). Functionally, catalyzes the transfer of the gamma-phospho group of ATP to thymidine to generate dTMP in the salvage pathway of pyrimidine synthesis. The dTMP serves as a substrate for DNA polymerase during viral DNA replication. Allows the virus to be reactivated and to grow in non-proliferative cells lacking a high concentration of phosphorylated nucleic acid precursors. This Bovine herpesvirus 1 (strain 6660) (BoHV-1) protein is Thymidine kinase.